Consider the following 349-residue polypeptide: Protein RecA (349 aa).

69–76 serves as a coordination point for ATP; the sequence is GPESSGKT.

This sequence belongs to the RecA family.

It is found in the cytoplasm. Functionally, can catalyze the hydrolysis of ATP in the presence of single-stranded DNA, the ATP-dependent uptake of single-stranded DNA by duplex DNA, and the ATP-dependent hybridization of homologous single-stranded DNAs. It interacts with LexA causing its activation and leading to its autocatalytic cleavage. The sequence is that of Protein RecA from Crocosphaera subtropica (strain ATCC 51142 / BH68) (Cyanothece sp. (strain ATCC 51142)).